Reading from the N-terminus, the 334-residue chain is Beta-hexosaminidase (334 aa).

Substrate-binding positions include aspartate 57, arginine 65, arginine 128, and 158–159 (KH). Histidine 171 acts as the Proton donor/acceptor in catalysis. Aspartate 242 acts as the Nucleophile in catalysis.

It belongs to the glycosyl hydrolase 3 family. NagZ subfamily.

Its subcellular location is the cytoplasm. It catalyses the reaction Hydrolysis of terminal non-reducing N-acetyl-D-hexosamine residues in N-acetyl-beta-D-hexosaminides.. The protein operates within cell wall biogenesis; peptidoglycan recycling. In terms of biological role, plays a role in peptidoglycan recycling by cleaving the terminal beta-1,4-linked N-acetylglucosamine (GlcNAc) from peptide-linked peptidoglycan fragments, giving rise to free GlcNAc, anhydro-N-acetylmuramic acid and anhydro-N-acetylmuramic acid-linked peptides. The polypeptide is Beta-hexosaminidase (Methylococcus capsulatus (strain ATCC 33009 / NCIMB 11132 / Bath)).